The chain runs to 147 residues: UPF0208 membrane protein PM0703 (147 aa).

Transmembrane regions (helical) follow at residues 32-52 and 65-85; these read VIKA…FAIT and LAIA…GLYW.

It belongs to the UPF0208 family.

The protein resides in the cell inner membrane. This chain is UPF0208 membrane protein PM0703, found in Pasteurella multocida (strain Pm70).